The chain runs to 95 residues: Small ubiquitin-related modifier 2 (95 aa).

Lysine 11 is covalently cross-linked (Glycyl lysine isopeptide (Lys-Gly) (interchain with G-Cter in SUMO)). Positions 16 to 95 constitute a Ubiquitin-like domain; the sequence is DHINLKVAGQ…VFQQQTGGSF (80 aa). Glycine 93 is covalently cross-linked (Glycyl lysine isopeptide (Gly-Lys) (interchain with K-? in acceptor proteins)). The propeptide occupies 94–95; the sequence is SF.

It belongs to the ubiquitin family. SUMO subfamily. In terms of assembly, interacts with sae2 and ube2i. Covalently attached to a number of proteins, including top2. Post-translationally, polymeric chains can be formed through Lys-11 cross-linking. In terms of processing, cleavage of precursor form by a sentrin-specific protease is necessary for function.

Its subcellular location is the nucleus. Functionally, ubiquitin-like protein that can be covalently attached to proteins as a monomer or as a lysine-linked polymer. Covalent attachment via an isopeptide bond to its substrates requires prior activation by the E1 complex sae1-sae2 and linkage to the E2 enzyme ube2i, and can be promoted by an E3 ligase such as pias1-4. This post-translational modification on lysine residues of proteins plays a crucial role in a number of cellular processes such as nuclear transport, DNA replication and repair, mitosis and signal transduction. Polymeric sumo2 chains are also susceptible to polyubiquitination which functions as a signal for proteasomal degradation of modified proteins. The polypeptide is Small ubiquitin-related modifier 2 (sumo2) (Xenopus tropicalis (Western clawed frog)).